Consider the following 66-residue polypeptide: Large ribosomal subunit protein uL30 (66 aa).

This sequence belongs to the universal ribosomal protein uL30 family. As to quaternary structure, part of the 50S ribosomal subunit.

This is Large ribosomal subunit protein uL30 from Azorhizobium caulinodans (strain ATCC 43989 / DSM 5975 / JCM 20966 / LMG 6465 / NBRC 14845 / NCIMB 13405 / ORS 571).